The primary structure comprises 169 residues: Cytochrome c oxidase subunit 4 isoform 1, mitochondrial (169 aa).

The transit peptide at 1–22 directs the protein to the mitochondrion; sequence MLATRVFSLIGRRAISTSVCVR. Residues 23 to 98 lie on the Mitochondrial matrix side of the membrane; it reads AHGSVVKSED…SFAEMNRSTN (76 aa). Position 29 is an N6-acetyllysine; alternate (K29). Position 29 is an N6-succinyllysine; alternate (K29). An N6-acetyllysine modification is found at K53. Phosphoserine is present on residues S56 and S58. K60 is subject to N6-acetyllysine; alternate. K60 bears the N6-succinyllysine; alternate mark. Position 67 is an N6-acetyllysine (K67). The chain crosses the membrane as a helical span at residues 99-124; that stretch reads EWKTVVGAAMFFIGFTALLLIWEKHY. Residues 125–169 lie on the Mitochondrial intermembrane side of the membrane; it reads VYGPIPHTFEEEWVAKQTKRMLDMKVAPIQGFSAKWDYDKNEWKK.

It belongs to the cytochrome c oxidase IV family. In terms of assembly, component of the cytochrome c oxidase (complex IV, CIV), a multisubunit enzyme composed of 14 subunits. The complex is composed of a catalytic core of 3 subunits MT-CO1, MT-CO2 and MT-CO3, encoded in the mitochondrial DNA, and 11 supernumerary subunits COX4I1 (or COX4I2), COX5A, COX5B, COX6A2 (or COX6A1), COX6B1 (or COX6B2), COX6C, COX7A1 (or COX7A2), COX7B, COX7C, COX8B and NDUFA4, which are encoded in the nuclear genome. The complex exists as a monomer or a dimer and forms supercomplexes (SCs) in the inner mitochondrial membrane with NADH-ubiquinone oxidoreductase (complex I, CI) and ubiquinol-cytochrome c oxidoreductase (cytochrome b-c1 complex, complex III, CIII), resulting in different assemblies (supercomplex SCI(1)III(2)IV(1) and megacomplex MCI(2)III(2)IV(2)). Interacts with PHB2; the interaction decreases in absence of SPHK2. Interacts with AFG1L. Interacts with ABCB7; this interaction allows the regulation of cellular iron homeostasis and cellular reactive oxygen species (ROS) levels in cardiomyocytes. Interacts with FLVCR2; this interaction occurs in the absence of heme and is disrupted upon heme binding. Interacts with IRGC.

It is found in the mitochondrion inner membrane. The protein operates within energy metabolism; oxidative phosphorylation. Component of the cytochrome c oxidase, the last enzyme in the mitochondrial electron transport chain which drives oxidative phosphorylation. The respiratory chain contains 3 multisubunit complexes succinate dehydrogenase (complex II, CII), ubiquinol-cytochrome c oxidoreductase (cytochrome b-c1 complex, complex III, CIII) and cytochrome c oxidase (complex IV, CIV), that cooperate to transfer electrons derived from NADH and succinate to molecular oxygen, creating an electrochemical gradient over the inner membrane that drives transmembrane transport and the ATP synthase. Cytochrome c oxidase is the component of the respiratory chain that catalyzes the reduction of oxygen to water. Electrons originating from reduced cytochrome c in the intermembrane space (IMS) are transferred via the dinuclear copper A center (CU(A)) of subunit 2 and heme A of subunit 1 to the active site in subunit 1, a binuclear center (BNC) formed by heme A3 and copper B (CU(B)). The BNC reduces molecular oxygen to 2 water molecules using 4 electrons from cytochrome c in the IMS and 4 protons from the mitochondrial matrix. This chain is Cytochrome c oxidase subunit 4 isoform 1, mitochondrial (COX4I1), found in Bos taurus (Bovine).